The following is a 210-amino-acid chain: uncharacterized protein (210 aa).

The next 5 helical transmembrane spans lie at 42–62 (ITLGIAFWGMLSMLGLAVLFV), 66–86 (ALHGVIMLLGGSYLAYLGFLM), 126–146 (VVVYFSSVMSLVLVNITEMWQ), 147–167 (IILAFAVIVVETFCYFYVISL), and 189–209 (AGIVFLFFGCVLVYNGINEII).

Belongs to the Rht family.

The protein localises to the cell membrane. This is an uncharacterized protein from Haemophilus influenzae (strain ATCC 51907 / DSM 11121 / KW20 / Rd).